Consider the following 336-residue polypeptide: Dihydroorotate dehydrogenase (quinone) (336 aa).

Residues 62–66 (AGLDK) and T86 each bind FMN. K66 contacts substrate. Residue 111–115 (NRMGF) coordinates substrate. FMN contacts are provided by N139 and N172. N172 contributes to the substrate binding site. The active-site Nucleophile is S175. N177 is a binding site for substrate. FMN is bound by residues K217 and T245. Residue 246–247 (NT) participates in substrate binding. FMN is bound by residues G268, G297, and 318–319 (YS).

This sequence belongs to the dihydroorotate dehydrogenase family. Type 2 subfamily. As to quaternary structure, monomer. Requires FMN as cofactor.

It is found in the cell membrane. The catalysed reaction is (S)-dihydroorotate + a quinone = orotate + a quinol. The protein operates within pyrimidine metabolism; UMP biosynthesis via de novo pathway; orotate from (S)-dihydroorotate (quinone route): step 1/1. Its function is as follows. Catalyzes the conversion of dihydroorotate to orotate with quinone as electron acceptor. The protein is Dihydroorotate dehydrogenase (quinone) of Escherichia coli (strain SE11).